The primary structure comprises 393 residues: NAD(P)H-quinone oxidoreductase subunit H, chloroplastic (393 aa).

Belongs to the complex I 49 kDa subunit family. As to quaternary structure, NDH is composed of at least 16 different subunits, 5 of which are encoded in the nucleus.

The protein resides in the plastid. It localises to the chloroplast thylakoid membrane. It carries out the reaction a plastoquinone + NADH + (n+1) H(+)(in) = a plastoquinol + NAD(+) + n H(+)(out). The catalysed reaction is a plastoquinone + NADPH + (n+1) H(+)(in) = a plastoquinol + NADP(+) + n H(+)(out). NDH shuttles electrons from NAD(P)H:plastoquinone, via FMN and iron-sulfur (Fe-S) centers, to quinones in the photosynthetic chain and possibly in a chloroplast respiratory chain. The immediate electron acceptor for the enzyme in this species is believed to be plastoquinone. Couples the redox reaction to proton translocation, and thus conserves the redox energy in a proton gradient. The protein is NAD(P)H-quinone oxidoreductase subunit H, chloroplastic of Draba nemorosa (Woodland whitlowgrass).